A 230-amino-acid polypeptide reads, in one-letter code: Ribonuclease 3 (230 aa).

The 121-residue stretch at 5-125 folds into the RNase III domain; that stretch reads YSRFYNILGY…VIGAIYLDSD (121 aa). Glu-40 provides a ligand contact to Mg(2+). The active site involves Asp-44. Positions 111 and 114 each coordinate Mg(2+). Residue Glu-114 is part of the active site. Residues 153-223 form the DRBM domain; sequence DSKSKLQEIL…AEKMIEMLSQ (71 aa).

Belongs to the ribonuclease III family. As to quaternary structure, homodimer. It depends on Mg(2+) as a cofactor.

The protein localises to the cytoplasm. It catalyses the reaction Endonucleolytic cleavage to 5'-phosphomonoester.. Digests double-stranded RNA. Involved in the processing of primary rRNA transcript to yield the immediate precursors to the large and small rRNAs (23S and 16S). Processes some mRNAs, and tRNAs when they are encoded in the rRNA operon. Processes pre-crRNA and tracrRNA of type II CRISPR loci if present in the organism. This is Ribonuclease 3 from Francisella tularensis subsp. holarctica (strain FTNF002-00 / FTA).